The sequence spans 892 residues: Alanine--tRNA ligase (892 aa).

Zn(2+) is bound by residues H578, H582, C681, and H685.

The protein belongs to the class-II aminoacyl-tRNA synthetase family. It depends on Zn(2+) as a cofactor.

It localises to the cytoplasm. The enzyme catalyses tRNA(Ala) + L-alanine + ATP = L-alanyl-tRNA(Ala) + AMP + diphosphate. Catalyzes the attachment of alanine to tRNA(Ala) in a two-step reaction: alanine is first activated by ATP to form Ala-AMP and then transferred to the acceptor end of tRNA(Ala). Also edits incorrectly charged Ser-tRNA(Ala) and Gly-tRNA(Ala) via its editing domain. This chain is Alanine--tRNA ligase, found in Cutibacterium acnes (strain DSM 16379 / KPA171202) (Propionibacterium acnes).